A 483-amino-acid polypeptide reads, in one-letter code: MORN repeat-containing protein 1 (483 aa).

The residue at position 18 (Ser-18) is a Phosphoserine. MORN repeat units lie at residues 39–61 (YEGEWKGGKKHGHGKLLFKDGSY), 62–84 (YEGEFVNGEITGEGYQHWAWSGN), 86–108 (YSGQFVLGEPQGHGIMKYKAGGH), 109–131 (YEGELSQGLREGQGFLEDQDGQV), 132–154 (YQGSFHDNKRHGRGQMVFKNGDK), 155–177 (YEGDWVRDQRQGHGVLFCADGST), and 178–200 (YKGQWHNDVFSGLGSLVHCSGVT). Residues 392-427 (EKAGNRPKGDRSPPEVLSTAQEPLRGTNRSDGTTAE) form a disordered region. Residues 394-404 (AGNRPKGDRSP) show a composition bias toward basic and acidic residues. Ser-403 carries the phosphoserine modification. Residues 418–427 (TNRSDGTTAE) are compositionally biased toward polar residues.

This chain is MORN repeat-containing protein 1 (Morn1), found in Rattus norvegicus (Rat).